A 127-amino-acid chain; its full sequence is Large ribosomal subunit protein bL12 (127 aa).

K77 and K88 each carry N6-methyllysine.

The protein belongs to the bacterial ribosomal protein bL12 family. In terms of assembly, homodimer. Part of the ribosomal stalk of the 50S ribosomal subunit. Forms a multimeric L10(L12)X complex, where L10 forms an elongated spine to which 2 to 4 L12 dimers bind in a sequential fashion. Binds GTP-bound translation factors.

Its function is as follows. Forms part of the ribosomal stalk which helps the ribosome interact with GTP-bound translation factors. Is thus essential for accurate translation. In Nitratidesulfovibrio vulgaris (strain DSM 19637 / Miyazaki F) (Desulfovibrio vulgaris), this protein is Large ribosomal subunit protein bL12.